Here is a 496-residue protein sequence, read N- to C-terminus: Probable CtpA-like serine protease (496 aa).

Basic and acidic residues predominate over residues 1-16 (MDDKQHTSSSDDERAE). Residues 1 to 27 (MDDKQHTSSSDDERAEIATSNQDQETN) form a disordered region. The segment covering 18 to 27 (ATSNQDQETN) has biased composition (polar residues). Residues 39–59 (FISILIGTTLITAVITVVAYI) traverse the membrane as a helical segment. The PDZ domain occupies 124-206 (TKSFNEGVSG…TEVTLTVQRG (83 aa)). Catalysis depends on charge relay system residues Ser-329, Asp-340, and Lys-354.

Belongs to the peptidase S41A family.

It localises to the cell membrane. The chain is Probable CtpA-like serine protease from Staphylococcus aureus (strain Mu50 / ATCC 700699).